The sequence spans 237 residues: Pyridoxine 5'-phosphate synthase (237 aa).

Positions 7 and 18 each coordinate 3-amino-2-oxopropyl phosphate. The active-site Proton acceptor is the His-43. Positions 45 and 50 each coordinate 1-deoxy-D-xylulose 5-phosphate. The active-site Proton acceptor is Glu-70. A 1-deoxy-D-xylulose 5-phosphate-binding site is contributed by Thr-100. His-190 (proton donor) is an active-site residue. Residues Asp-191 and 213–214 (GH) contribute to the 3-amino-2-oxopropyl phosphate site.

This sequence belongs to the PNP synthase family. Homooctamer; tetramer of dimers.

Its subcellular location is the cytoplasm. It carries out the reaction 3-amino-2-oxopropyl phosphate + 1-deoxy-D-xylulose 5-phosphate = pyridoxine 5'-phosphate + phosphate + 2 H2O + H(+). The protein operates within cofactor biosynthesis; pyridoxine 5'-phosphate biosynthesis; pyridoxine 5'-phosphate from D-erythrose 4-phosphate: step 5/5. In terms of biological role, catalyzes the complicated ring closure reaction between the two acyclic compounds 1-deoxy-D-xylulose-5-phosphate (DXP) and 3-amino-2-oxopropyl phosphate (1-amino-acetone-3-phosphate or AAP) to form pyridoxine 5'-phosphate (PNP) and inorganic phosphate. The protein is Pyridoxine 5'-phosphate synthase of Flavobacterium johnsoniae (strain ATCC 17061 / DSM 2064 / JCM 8514 / BCRC 14874 / CCUG 350202 / NBRC 14942 / NCIMB 11054 / UW101) (Cytophaga johnsonae).